The chain runs to 554 residues: Propanediol dehydratase large subunit (554 aa).

This sequence belongs to the diol/glycerol dehydratase large subunit family. The propanediol dehydratase enzyme is a heterotrimeric complex composed of a large (PduC), a medium (PduD) and a small (PduE) subunit. The cofactor is adenosylcob(III)alamin.

It localises to the bacterial microcompartment. The catalysed reaction is propane-1,2-diol = propanal + H2O. It functions in the pathway polyol metabolism; 1,2-propanediol degradation. With respect to regulation, inhibited by glycerol. Functionally, part of the PduCDE complex that catalyzes the dehydration of 1,2-propanediol (1,2-PD) to propionaldehyde. Required for S.typhimurium growth on 1,2-PD as the sole carbon and energy source. This subunit is directly targeted to the BMC. The 1,2-PD-specific bacterial microcompartment (BMC) concentrates low levels of 1,2-PD catabolic enzymes, concentrates volatile reaction intermediates thus enhancing pathway flux and keeps the level of toxic, mutagenic propionaldehyde low. This Salmonella typhimurium (strain LT2 / SGSC1412 / ATCC 700720) protein is Propanediol dehydratase large subunit.